A 514-amino-acid polypeptide reads, in one-letter code: Peptide chain release factor 3 (514 aa).

The tr-type G domain occupies 8–268; sequence KKRRTFAIIS…TFLKFAPEPH (261 aa). GTP-binding positions include 17–24, 85–89, and 139–142; these read SHPDAGKT, DTPGH, and NKLD.

Belongs to the TRAFAC class translation factor GTPase superfamily. Classic translation factor GTPase family. PrfC subfamily.

It localises to the cytoplasm. Functionally, increases the formation of ribosomal termination complexes and stimulates activities of RF-1 and RF-2. It binds guanine nucleotides and has strong preference for UGA stop codons. It may interact directly with the ribosome. The stimulation of RF-1 and RF-2 is significantly reduced by GTP and GDP, but not by GMP. The protein is Peptide chain release factor 3 of Streptococcus thermophilus (strain CNRZ 1066).